Consider the following 1707-residue polypeptide: MANGNFKLSQLLNVDEMSAEQRSHFFDLMLTKPDCEIGQMMQRVVVDKVDDMIRERKTKDPVIVHEVLSQKEQNKLMEIYPEFNIVFKDDKNMVHGFAAAERKLQALLLLDRVPALQEVDDIGGQWSFWVTRGEKRIHSCCPNLDIRDDQREISRQIFLTAIGDQARSGKRQMSENELWMYDQFRKNIAAPNAVRCNNTYHGCTCRGFSDGKKKGAQYAIALHSLYDFKLKDLMATMVEKKTKVGHAAMLFAPESMLVDEGPLPSVDGYYMKKNGKIYFGFEKDPSFSYIHDWEEYKKYLLGKPVSYQGNVFYFEPWQVRGDTMLFSIYRIAGVPRRSLSSQEYYRRIYISRWENMVVVPIFDLVESTRELVKKDLFVEKQFMDKCLDYIARLSDQQLTISNVKSYLSSNNWVLFINGAAVKNKQSVDSRDLQLLAQTLLVKEQVARPVMRELREAILTETKPITSLTDVLGLISRKMWKQFANKIAVGGFVGMVGTLIGFYPKKVLTWAKDTPNGPELCYENSHKTKVIVFLSVVYAIGGITLMRRDIRDGLVKKLCDMFDIKRGAHVLDVENPCRYYDINDFFSSLYSASESGETVLPDLSEVKAKSDKLLQQKKEIADEFLSAKFSNYSGSSVRTSPPSVVGSSRSGLGLLLEDSNVLTQARVGVSRKVADEEIMEQFLSGLIDTEAEIDEVVPAFSAECERGETSGTKVLCNLLTPPGFENVLPAVKPLVSKGKTVKRVDYFQVMGGERLPKRPVVSGDDSVDARREFLYYLDAERVAQNDEIMSLYRDYSRGVIRTGGQNYPHGLGVWDVEMKNWCIRPVVTEHAYVSNPDKRMDDWSGYLEVAVWERGMLVNDFAVERMSDYVIVCDQTYLCNNRLILDNLSALDLGPVNCSFELVDGVPGCGKSTMIVNSANPCVDVVLSTGRAATDDLIERFASKGFPCKLKRRVKTVDSFLMHCVDGSLTGDVLHFDEALMAHAGMVYFCAQIAGAKRCICQGDQNQISFKPRVSQVDLRFSSLVGKFDIVTEKRETYRSPADVAAVLNKYYTGDVRTHNATANSMTVRKIVSKEQVSLKPGAQYITFLQSEKKELVNLLALRKVAAKVSTVHESQGETFKDVVLVRTKPTDDSIARGREYLIVALSRHTQSLVYETVKEDDVSKEIRESAALTKAALARFFVTETVLXRFRSRFDVFRHHEGPCAVPDSGTITDLEMWYDALFPGNSLRDSSLDGYLVATTDCNLRLDNVTIKSGNWKDKFAEKETFLKPVIRTAMPDKRKTTQLESLLALQKRNQAAPDLQENVHATVLIEETMKKLKSVVYDVGKIRADPIVNRAQMERWWRNQSTAVQAKVVADVRELHEIDYSSYMFMIKSDVKPKTDLTPQFEYSALQTVVYHEKLINSLFGPIFKEINERKLDAMQPHFVFNTRMTSSDLNDRVKFLNTEAAYDFVEIDMSKFDKSANRFHLQLQLEIYRLFGLDEWAAFLWEVSHTQTTVRDIQNGMMAHIWYQQKSGDADTYNANSDRTLCALLSELPLEKAVMVTYGGDDSLIAFPRGTQFVDPCPKLATKWNFECKIFKYDVPMFCGKFLLKTSSCYEFVPDPVKVLTKLGKKSIKDVQHLAEIYISLNDSNRALGNYMVVSKLSESVSDRYLYKGDSVHALCALWKHIKSFTALCTLFRDENDKELNPAKVDWKKAQRAVSNFYDW.

The methyltransferase stretch occupies residues 65–425 (HEVLSQKEQN…INGAAVKNKQ (361 aa)). An Alphavirus-like MT domain is found at 86 to 300 (VFKDDKNMVH…HDWEEYKKYL (215 aa)). Residues 601–622 (DLSEVKAKSDKLLQQKKEIADE) adopt a coiled-coil conformation. In terms of domain architecture, (+)RNA virus helicase ATP-binding spans 872-1033 (CDQTYLCNNR…VGKFDIVTEK (162 aa)). The interval 901–1155 (LVDGVPGCGK…SRHTQSLVYE (255 aa)) is helicase. Positions 1034–1187 (RETYRSPADV…ARFFVTETVL (154 aa)) constitute a (+)RNA virus helicase C-terminal domain. The RdRp catalytic domain occupies 1449 to 1562 (YDFVEIDMSK…AFPRGTQFVD (114 aa)).

The protein belongs to the ssRNA positive-strand viruses RNA-directed RNA polymerase family. Heterodimer of a large and a small subunit.

It catalyses the reaction ATP + H2O = ADP + phosphate + H(+). The enzyme catalyses RNA(n) + a ribonucleoside 5'-triphosphate = RNA(n+1) + diphosphate. In terms of biological role, is an RNA-dependent RNA polymerase active in viral RNA replication. Its function is as follows. Is a methyltransferase active in RNA capping and an RNA helicase. Methyltransferase displays a cytoplasmic capping enzyme activity. This function is necessary since all viral RNAs are synthesized in the cytoplasm, and host capping enzymes are restricted to the nucleus. Helicase region probably exhibits NTPase and RNA unwinding activities (Potential). This is Replicase large subunit from Tobacco rattle virus (isolate PpK20) (TRV).